The sequence spans 184 residues: uncharacterized protein (184 aa).

Residues 35–55 (LSFLIYILYTFSISGLSTFVI) form a helical membrane-spanning segment.

The protein resides in the membrane. This is an uncharacterized protein from Schizosaccharomyces pombe (strain 972 / ATCC 24843) (Fission yeast).